Consider the following 147-residue polypeptide: MRTIFVGVLLLAIMGEGRLCALEWPVDKPKFLSLFGQSVGAGLLQQGLIFDGADSAGERGYAVRTAGYGRCVMRLQKHRRARVFPGALGNALIFAHEDGLQTVYANLREAKNAQDFGSTAEAESGVTVGYAGSSAWAPPNSFVFPGD.

An N-terminal signal peptide occupies residues 1–21; the sequence is MRTIFVGVLLLAIMGEGRLCA.

This is an uncharacterized protein from Treponema pallidum (strain Nichols).